We begin with the raw amino-acid sequence, 200 residues long: Ependymin-related protein 1 (200 aa).

An N-terminal signal peptide occupies residues 1 to 17 (MILQAALFLAGLTVVSG). Asn-36, Asn-124, and Asn-136 each carry an N-linked (GlcNAc...) asparagine glycan.

It belongs to the ependymin family. In terms of tissue distribution, component of the acid-soluble and acid-insoluble organic matrix of prismatic shell layers (at protein level). Expressed discontinuously in the anterior zone of the outer fold of the mantle where its expression correlates with shell pigmentation.

The protein localises to the secreted. This Haliotis asinina (Donkey's ear abalone) protein is Ependymin-related protein 1.